The sequence spans 145 residues: 3-hydroxyacyl-[acyl-carrier-protein] dehydratase FabZ (145 aa).

His-48 is an active-site residue.

This sequence belongs to the thioester dehydratase family. FabZ subfamily.

It localises to the cytoplasm. It carries out the reaction a (3R)-hydroxyacyl-[ACP] = a (2E)-enoyl-[ACP] + H2O. In terms of biological role, involved in unsaturated fatty acids biosynthesis. Catalyzes the dehydration of short chain beta-hydroxyacyl-ACPs and long chain saturated and unsaturated beta-hydroxyacyl-ACPs. This chain is 3-hydroxyacyl-[acyl-carrier-protein] dehydratase FabZ, found in Saccharophagus degradans (strain 2-40 / ATCC 43961 / DSM 17024).